The chain runs to 642 residues: Zinc finger protein 14 (642 aa).

The KRAB domain maps to 4–76 (VSFEDVAVNF…MVERLCESRR (73 aa)). The segment at 103-125 (HECSFCGRDFIHHSSLNRHMRSH) adopts a C2H2-type 1 zinc-finger fold. A C2H2-type 2; degenerate zinc finger spans residues 141 to 163 (CKCKAVGKTFSYHHCFRKHERTH). The segment at 169-191 (YECKQCGKAFIYYQPFQRHERTH) adopts a C2H2-type 3 zinc-finger fold. The segment at 197–217 (YECKQCGKTFIYYQSFQKHAH) adopts a C2H2-type 4; atypical zinc-finger fold. C2H2-type zinc fingers lie at residues 223–245 (YECKQCGKAFICYQSFQRHKRTH), 251–273 (YECKQCGKAFSCPTYFRTHERTH), 279–301 (YKCKECGKAFSFLSSFRRHKRTH), 307–329 (YECKECGKAFFYSASFRAHVIIH), 335–357 (YKCKECGKAFNSSNSCRVHERTH), 363–385 (YECKRCGKSFSWSISLRLHERTH), 391–413 (YECKQCHKTFSFSSSLREHETTH), 419–441 (YECKQCGKTFSFSSSLQRHERTH), 447–469 (YECKQCGKAFRCSSYFRIHERSH), 475–497 (YECKQCGKVFIRSSSFRLHERTH), 503–525 (YECKLCGKTFSFSSSLREHEKIH), 531–553 (FECKQCGKAFLRSSQIRLHERTH), 559–581 (YQCKQCGKAFISSSKFRMHERTH), 587–609 (YRCKQCGKAFRFSSSVRIHERSH), and 615–637 (YECKQCGKAFISSSHFRLHERTH).

Belongs to the krueppel C2H2-type zinc-finger protein family.

The protein resides in the nucleus. May be involved in transcriptional regulation. This Homo sapiens (Human) protein is Zinc finger protein 14 (ZNF14).